Reading from the N-terminus, the 548-residue chain is (2S)-methylsuccinyl-CoA dehydrogenase (548 aa).

FAD-binding positions include 282–291 (AVFTEPNTGS) and 315–317 (WIT). Ser-291 provides a ligand contact to substrate. 409 to 412 (ESAR) serves as a coordination point for substrate. Residues Arg-437 and 505–509 (QIHGG) each bind FAD. Glu-532 functions as the Proton acceptor in the catalytic mechanism. 534–536 (AAE) serves as a coordination point for FAD.

Belongs to the acyl-CoA dehydrogenase family. As to quaternary structure, homodimer. It depends on FAD as a cofactor.

The enzyme catalyses (2S)-methylsuccinyl-CoA + oxidized [electron-transfer flavoprotein] + H(+) = 2-methylfumaryl-CoA + reduced [electron-transfer flavoprotein]. In terms of biological role, involved in the ethylmalonyl-CoA pathway, a new acetyl-CoA assimilation strategy that operates in a number of bacteria and replaces the glyoxylate cycle. Catalyzes the oxidation of (2S)-methylsuccinyl-CoA to yield mesaconyl-(C1)-CoA. Highly specific for (S)-methylsuccinyl-CoA. This chain is (2S)-methylsuccinyl-CoA dehydrogenase, found in Cereibacter sphaeroides (Rhodobacter sphaeroides).